The following is a 94-amino-acid chain: Phosphoribosyl-ATP pyrophosphatase (94 aa).

It belongs to the PRA-PH family.

The protein localises to the cytoplasm. It carries out the reaction 1-(5-phospho-beta-D-ribosyl)-ATP + H2O = 1-(5-phospho-beta-D-ribosyl)-5'-AMP + diphosphate + H(+). It participates in amino-acid biosynthesis; L-histidine biosynthesis; L-histidine from 5-phospho-alpha-D-ribose 1-diphosphate: step 2/9. The protein is Phosphoribosyl-ATP pyrophosphatase (hisE) of Saccharolobus solfataricus (strain ATCC 35092 / DSM 1617 / JCM 11322 / P2) (Sulfolobus solfataricus).